Consider the following 87-residue polypeptide: uncharacterized protein (87 aa).

The N-terminal stretch at 1 to 19 (MLVLQLAVLVTAVYAFVHA) is a signal peptide. A helical transmembrane segment spans residues 51–71 (ILGFVFGVLGIVIAACAAGVY).

To M.tuberculosis Rv0476.

Its subcellular location is the membrane. This is an uncharacterized protein from Mycobacterium leprae (strain TN).